A 230-amino-acid polypeptide reads, in one-letter code: 5'-methylthioadenosine/S-adenosylhomocysteine nucleosidase (230 aa).

The active-site Proton acceptor is the Glu12. Residues Gly78, Ile153, and 174–175 (ME) contribute to the substrate site. Asp198 (proton donor) is an active-site residue.

Belongs to the PNP/UDP phosphorylase family. MtnN subfamily.

It carries out the reaction S-adenosyl-L-homocysteine + H2O = S-(5-deoxy-D-ribos-5-yl)-L-homocysteine + adenine. It catalyses the reaction S-methyl-5'-thioadenosine + H2O = 5-(methylsulfanyl)-D-ribose + adenine. The enzyme catalyses 5'-deoxyadenosine + H2O = 5-deoxy-D-ribose + adenine. Its pathway is amino-acid biosynthesis; L-methionine biosynthesis via salvage pathway; S-methyl-5-thio-alpha-D-ribose 1-phosphate from S-methyl-5'-thioadenosine (hydrolase route): step 1/2. Its function is as follows. Catalyzes the irreversible cleavage of the glycosidic bond in both 5'-methylthioadenosine (MTA) and S-adenosylhomocysteine (SAH/AdoHcy) to adenine and the corresponding thioribose, 5'-methylthioribose and S-ribosylhomocysteine, respectively. Also cleaves 5'-deoxyadenosine, a toxic by-product of radical S-adenosylmethionine (SAM) enzymes, into 5-deoxyribose and adenine. In Shewanella denitrificans (strain OS217 / ATCC BAA-1090 / DSM 15013), this protein is 5'-methylthioadenosine/S-adenosylhomocysteine nucleosidase.